We begin with the raw amino-acid sequence, 996 residues long: Protein psiR (996 aa).

The signal sequence occupies residues 1–21 (MKKIILMLLLFSIFFILKSES). 9 N-linked (GlcNAc...) asparagine glycosylation sites follow: Asn-79, Asn-117, Asn-323, Asn-396, Asn-428, Asn-474, Asn-500, Asn-645, and Asn-779. The PA14 domain maps to 105 to 250 (QSLSNPNIYS…YDECGVCEGD (146 aa)).

Belongs to the prespore-cell-inducing factor family.

The protein localises to the secreted. The chain is Protein psiR (psiR) from Dictyostelium discoideum (Social amoeba).